Reading from the N-terminus, the 327-residue chain is Zinc transport protein ZntB (327 aa).

Over 1 to 271 the chain is Cytoplasmic; that stretch reads MDVVEGKALQ…AMNRRTYTMS (271 aa). The chain crosses the membrane as a helical span at residues 272–292; it reads LLAMVFLPTTFLTGLFGVNLG. Residues 293–300 lie on the Periplasmic side of the membrane; sequence GIPGNTDA. Residues 301–321 form a helical membrane-spanning segment; it reads FGFTIFCMMLVVLVLSVAWWL. The Cytoplasmic portion of the chain corresponds to 322–327; that stretch reads KRSKWL.

It belongs to the CorA metal ion transporter (MIT) (TC 1.A.35) family.

It is found in the cell inner membrane. It catalyses the reaction Zn(2+)(out) + H(+)(out) = Zn(2+)(in) + H(+)(in). Functionally, zinc transporter. Acts as a Zn(2+):proton symporter, which likely mediates zinc ion uptake. This Yersinia pseudotuberculosis serotype O:1b (strain IP 31758) protein is Zinc transport protein ZntB.